A 255-amino-acid chain; its full sequence is Aliphatic sulfonates import ATP-binding protein SsuB (255 aa).

Residues 12-233 (LLLNAVSKHY…RLGSVRLAEL (222 aa)) enclose the ABC transporter domain. ATP is bound at residue 44–51 (GRSGGGKS).

Belongs to the ABC transporter superfamily. Aliphatic sulfonates importer (TC 3.A.1.17.2) family. The complex is composed of two ATP-binding proteins (SsuB), two transmembrane proteins (SsuC) and a solute-binding protein (SsuA).

The protein localises to the cell inner membrane. It carries out the reaction ATP + H2O + aliphatic sulfonate-[sulfonate-binding protein]Side 1 = ADP + phosphate + aliphatic sulfonateSide 2 + [sulfonate-binding protein]Side 1.. In terms of biological role, part of the ABC transporter complex SsuABC involved in aliphatic sulfonates import. Responsible for energy coupling to the transport system. This is Aliphatic sulfonates import ATP-binding protein SsuB from Escherichia coli O1:K1 / APEC.